Consider the following 602-residue polypeptide: Sodium- and chloride-dependent GABA transporter 2 (602 aa).

The Cytoplasmic segment spans residues Met-1–Glu-40. Helical transmembrane passes span Phe-41–Leu-61, Gly-68–Leu-88, and Ile-121–Phe-141. The Extracellular segment spans residues Ser-142–Trp-206. A disulfide bond links Cys-153 and Cys-162. N-linked (GlcNAc...) asparagine glycosylation is found at Asn-169, Asn-173, and Asn-178. A run of 2 helical transmembrane segments spans residues Glu-207–Val-227 and Val-233–Val-253. Asn-269 carries N-linked (GlcNAc...) asparagine glycosylation. The next 7 membrane-spanning stretches (helical) occupy residues Ala-282–Ser-302, Ile-319–Met-339, Val-366–Leu-386, Ile-418–Gly-438, Gly-453–Ala-473, Pro-490–Phe-510, and Trp-528–Trp-548. Residues Ser-549 to Cys-602 lie on the Cytoplasmic side of the membrane. Thr-587 carries the phosphothreonine modification. A Phosphoserine modification is found at Ser-591.

It belongs to the sodium:neurotransmitter symporter (SNF) (TC 2.A.22) family. SLC6A13 subfamily. As to expression, brain, retina, and peripheral tissues. Expressed in hepatocytes (at protein level).

It is found in the cell membrane. The protein localises to the basolateral cell membrane. The catalysed reaction is 4-aminobutanoate(out) + chloride(out) + 2 Na(+)(out) = 4-aminobutanoate(in) + chloride(in) + 2 Na(+)(in). The enzyme catalyses taurine(out) + chloride(out) + 2 Na(+)(out) = taurine(in) + chloride(in) + 2 Na(+)(in). It carries out the reaction beta-alanine(out) + chloride(out) + 2 Na(+)(out) = beta-alanine(in) + chloride(in) + 2 Na(+)(in). It catalyses the reaction hypotaurine(out) + chloride(out) + 2 Na(+)(out) = hypotaurine(in) + chloride(in) + 2 Na(+)(in). With respect to regulation, GABA transport is inhibited by beta-alanine, L-2,4-Diaminobutyric acid, hypotaurine and nipecotic acid. Taurine transport is inhibited by hypotaurine, beta-alanine and nipecotic acid. In terms of biological role, mediates sodium- and chloride-dependent transport of gamma-aminobutyric acid (GABA). Mediates transport of taurine and is the major taurine transporter in hepatocytes. Can also mediate transport of beta-alanine and hypotaurine. This chain is Sodium- and chloride-dependent GABA transporter 2 (Slc6a13), found in Rattus norvegicus (Rat).